A 215-amino-acid polypeptide reads, in one-letter code: Small ribosomal subunit protein uS3 (215 aa).

A KH type-2 domain is found at 39 to 109 (IRKFIKKRLE…EVLVDVKEVK (71 aa)).

The protein belongs to the universal ribosomal protein uS3 family. In terms of assembly, part of the 30S ribosomal subunit. Forms a tight complex with proteins S10 and S14.

In terms of biological role, binds the lower part of the 30S subunit head. Binds mRNA in the 70S ribosome, positioning it for translation. The polypeptide is Small ribosomal subunit protein uS3 (Methylacidiphilum infernorum (isolate V4) (Methylokorus infernorum (strain V4))).